Reading from the N-terminus, the 298-residue chain is MRGLDYRWIEALDSVVSKGSFERAAEQLFISQSAVSQRIKQLEKYLAQPVLIREQPPRPTLVGKKLLGLYRRVCLIEQELVPELTNQEHVRPVSMSIATNADSLATWLLPALDKVMKSRQVELNLVIYGESRTLDKLKNGEVVGAISLEPQPITGCSAEYLGQMEYLCVASPEFYQKYFAKGVTPRSLIKAPAVSYDQYDELHNKFLWDYFAVLRDKVINHTVGSSEAFVRLALSGAAYCLIPRLQIISELESGALINMTPDFMLSYPIFWHHWQLETGVLLEISDAITAYAKSVLPQ.

The region spanning L4–T60 is the HTH lysR-type domain. A DNA-binding region (H-T-H motif) is located at residues F21–K40.

It belongs to the LysR transcriptional regulatory family. In terms of assembly, homodimer.

In terms of biological role, controls the transcription of genes involved in arginine and lysine metabolism. This chain is HTH-type transcriptional regulator ArgP, found in Vibrio cholerae serotype O1 (strain ATCC 39541 / Classical Ogawa 395 / O395).